The chain runs to 347 residues: L-threonine 3-dehydrogenase (347 aa).

Zn(2+) is bound at residue cysteine 43. Catalysis depends on charge relay system residues threonine 45 and histidine 48. The Zn(2+) site is built by histidine 68, glutamate 69, cysteine 98, cysteine 101, cysteine 104, and cysteine 112. Residues isoleucine 180, aspartate 200, arginine 205, 267-269 (LSL), and 292-293 (IT) contribute to the NAD(+) site.

The protein belongs to the zinc-containing alcohol dehydrogenase family. As to quaternary structure, homotetramer. It depends on Zn(2+) as a cofactor.

The protein resides in the cytoplasm. It carries out the reaction L-threonine + NAD(+) = (2S)-2-amino-3-oxobutanoate + NADH + H(+). The protein operates within amino-acid degradation; L-threonine degradation via oxydo-reductase pathway; glycine from L-threonine: step 1/2. In terms of biological role, catalyzes the NAD(+)-dependent oxidation of L-threonine to 2-amino-3-ketobutyrate. The polypeptide is L-threonine 3-dehydrogenase (Bacillus subtilis (strain 168)).